A 127-amino-acid chain; its full sequence is MNLIAQLEAEQVEALAKDIPDFKAGDTVRVGFRVTEGTRTRVQNYEGVCIARKNGHGIAGSFTVRKISFGEGVERVFPLHSTNIDSITVIRRGRVRRAKLYYLRSRRGKSARIAEDTRYKPRKSASA.

The protein belongs to the bacterial ribosomal protein bL19 family.

In terms of biological role, this protein is located at the 30S-50S ribosomal subunit interface and may play a role in the structure and function of the aminoacyl-tRNA binding site. This chain is Large ribosomal subunit protein bL19, found in Jannaschia sp. (strain CCS1).